We begin with the raw amino-acid sequence, 176 residues long: uncharacterized protein (176 aa).

The span at 87–100 shows a compositional bias: low complexity; sequence ASASSQLRASRVQS. The tract at residues 87 to 109 is disordered; that stretch reads ASASSQLRASRVQSGTRQSARAG.

This is an uncharacterized protein from Homo sapiens (Human).